An 83-amino-acid polypeptide reads, in one-letter code: Small ribosomal subunit protein eS27 (83 aa).

The segment at 37–59 (CSGCFKISTVFSHATTVVVCVGC) adopts a C4-type zinc-finger fold.

This sequence belongs to the eukaryotic ribosomal protein eS27 family. The cofactor is Zn(2+).

This chain is Small ribosomal subunit protein eS27 (rps-27), found in Caenorhabditis elegans.